Here is a 427-residue protein sequence, read N- to C-terminus: Peptidase B (427 aa).

Residues K195 and D200 each contribute to the Mn(2+) site. K207 is a catalytic residue. Mn(2+) contacts are provided by D218, D277, and E279. Residue R281 is part of the active site.

The protein belongs to the peptidase M17 family. As to quaternary structure, homohexamer. Requires Mn(2+) as cofactor.

Its subcellular location is the cytoplasm. It carries out the reaction Release of an N-terminal amino acid, Xaa, from a peptide or arylamide. Xaa is preferably Glu or Asp but may be other amino acids, including Leu, Met, His, Cys and Gln.. Its function is as follows. Probably plays an important role in intracellular peptide degradation. This is Peptidase B from Salmonella arizonae (strain ATCC BAA-731 / CDC346-86 / RSK2980).